The chain runs to 274 residues: Diaminopimelate epimerase (274 aa).

Residues N11, Q44, and N64 each coordinate substrate. C73 serves as the catalytic Proton donor. Substrate contacts are provided by residues 74 to 75 (GN), N157, N190, and 208 to 209 (ER). C217 acts as the Proton acceptor in catalysis. A substrate-binding site is contributed by 218–219 (GS).

Belongs to the diaminopimelate epimerase family. Homodimer.

It localises to the cytoplasm. It catalyses the reaction (2S,6S)-2,6-diaminopimelate = meso-2,6-diaminopimelate. It functions in the pathway amino-acid biosynthesis; L-lysine biosynthesis via DAP pathway; DL-2,6-diaminopimelate from LL-2,6-diaminopimelate: step 1/1. In terms of biological role, catalyzes the stereoinversion of LL-2,6-diaminopimelate (L,L-DAP) to meso-diaminopimelate (meso-DAP), a precursor of L-lysine and an essential component of the bacterial peptidoglycan. The sequence is that of Diaminopimelate epimerase from Histophilus somni (strain 129Pt) (Haemophilus somnus).